Reading from the N-terminus, the 200-residue chain is Small ribosomal subunit protein uS2 (200 aa).

The protein belongs to the universal ribosomal protein uS2 family.

In Picrophilus torridus (strain ATCC 700027 / DSM 9790 / JCM 10055 / NBRC 100828 / KAW 2/3), this protein is Small ribosomal subunit protein uS2.